A 1349-amino-acid chain; its full sequence is Protein turtle homolog B (1349 aa).

Residues Met-1–Ala-20 form the signal peptide. The Extracellular portion of the chain corresponds to Glu-21–Pro-722. 5 Ig-like domains span residues His-24–Ser-129, Pro-139–Gln-226, Pro-228–Thr-320, Pro-324–Val-415, and Pro-420–Thr-504. 2 disulfide bridges follow: Cys-45–Cys-113 and Cys-161–Cys-208. 2 N-linked (GlcNAc...) asparagine glycosylation sites follow: Asn-241 and Asn-258. 3 disulfides stabilise this stretch: Cys-250-Cys-303, Cys-346-Cys-397, and Cys-442-Cys-488. Fibronectin type-III domains follow at residues Ala-512–Phe-604 and Leu-614–Ile-708. An N-linked (GlcNAc...) asparagine glycan is attached at Asn-624. Residues Val-723–Leu-743 traverse the membrane as a helical segment. Residues Ala-744–Leu-1349 are Cytoplasmic-facing. Disordered stretches follow at residues Arg-758 to Leu-817, Gln-911 to Pro-1081, and Ala-1099 to Leu-1349. Residues Ser-775, Ser-783, and Ser-794 each carry the phosphoserine modification. Over residues Gln-911–Ser-921 the composition is skewed to polar residues. A compositionally biased stretch (low complexity) spans Val-985–Ser-998. 3 stretches are compositionally biased toward polar residues: residues Glu-1018–Gly-1033, Leu-1129–Gly-1141, and Ser-1199–Gly-1214. Arg-1136 carries the omega-N-methylarginine modification. A phosphoserine mark is found at Ser-1207 and Ser-1215. A compositionally biased stretch (low complexity) spans Ser-1251–Pro-1271. The segment covering Pro-1283–Ala-1292 has biased composition (pro residues).

It belongs to the immunoglobulin superfamily. Turtle family. In terms of assembly, found in a complex with MAGI2 and NLGN2, where it interacts with MAGI2 (via PDZ 5 and PDZ 6 domains). N-glycosylated and sialylated. Not significantly O-glycosylated.

It is found in the postsynaptic cell membrane. Its subcellular location is the postsynaptic density. In terms of biological role, transmembrane protein which is abundantly expressed in interneurons, where it may regulate inhibitory synapse development. May mediate homophilic cell adhesion. The chain is Protein turtle homolog B (IGSF9B) from Homo sapiens (Human).